Here is a 218-residue protein sequence, read N- to C-terminus: Monomethylamine corrinoid protein 1 (218 aa).

The B12-binding N-terminal domain maps to M1 to E91. One can recognise a B12-binding domain in the interval T94 to K218. H107 contributes to the methylcob(III)alamin binding site.

The protein belongs to the methylamine corrinoid protein family. In terms of assembly, can form a complex with MtmB.

It functions in the pathway one-carbon metabolism; methanogenesis from methylamine. In terms of biological role, acts as a methyl group carrier between MtmB and MtbA. The sequence is that of Monomethylamine corrinoid protein 1 (mtmC1) from Methanosarcina mazei (strain ATCC BAA-159 / DSM 3647 / Goe1 / Go1 / JCM 11833 / OCM 88) (Methanosarcina frisia).